Consider the following 420-residue polypeptide: Glutamyl-tRNA reductase (420 aa).

Substrate contacts are provided by residues 49–52 (TCNR), serine 107, 112–114 (EPQ), and glutamine 118. The active-site Nucleophile is the cysteine 50. Position 187 to 192 (187 to 192 (GAGETI)) interacts with NADP(+).

This sequence belongs to the glutamyl-tRNA reductase family. In terms of assembly, homodimer.

The enzyme catalyses (S)-4-amino-5-oxopentanoate + tRNA(Glu) + NADP(+) = L-glutamyl-tRNA(Glu) + NADPH + H(+). Its pathway is porphyrin-containing compound metabolism; protoporphyrin-IX biosynthesis; 5-aminolevulinate from L-glutamyl-tRNA(Glu): step 1/2. In terms of biological role, catalyzes the NADPH-dependent reduction of glutamyl-tRNA(Glu) to glutamate 1-semialdehyde (GSA). This Nitrosococcus oceani (strain ATCC 19707 / BCRC 17464 / JCM 30415 / NCIMB 11848 / C-107) protein is Glutamyl-tRNA reductase.